The following is a 160-amino-acid chain: NADH-quinone oxidoreductase subunit B (160 aa).

Residues Cys37, Cys38, Cys102, and Cys132 each contribute to the [4Fe-4S] cluster site.

This sequence belongs to the complex I 20 kDa subunit family. As to quaternary structure, NDH-1 is composed of 14 different subunits. Subunits NuoB, C, D, E, F, and G constitute the peripheral sector of the complex. The cofactor is [4Fe-4S] cluster.

The protein localises to the cell inner membrane. The enzyme catalyses a quinone + NADH + 5 H(+)(in) = a quinol + NAD(+) + 4 H(+)(out). Its function is as follows. NDH-1 shuttles electrons from NADH, via FMN and iron-sulfur (Fe-S) centers, to quinones in the respiratory chain. Couples the redox reaction to proton translocation (for every two electrons transferred, four hydrogen ions are translocated across the cytoplasmic membrane), and thus conserves the redox energy in a proton gradient. This chain is NADH-quinone oxidoreductase subunit B, found in Neisseria gonorrhoeae (strain NCCP11945).